A 208-amino-acid chain; its full sequence is Microcin J25-processing protein McjB (208 aa).

The protein resides in the cytoplasm. Its function is as follows. Along with McjC, necessary and sufficient to process the inactive microcin J25 (McjA) precursor into the active peptide. In Escherichia coli, this protein is Microcin J25-processing protein McjB (mcjB).